We begin with the raw amino-acid sequence, 371 residues long: Queuine tRNA-ribosyltransferase (371 aa).

The active-site Proton acceptor is the D90. Substrate contacts are provided by residues D90–F94, D144, Q185, and G212. The interval G243–D249 is RNA binding. The active-site Nucleophile is the D262. Residues T267–R271 form an RNA binding; important for wobble base 34 recognition region. Zn(2+)-binding residues include C300, C302, C305, and H331.

This sequence belongs to the queuine tRNA-ribosyltransferase family. As to quaternary structure, homodimer. Within each dimer, one monomer is responsible for RNA recognition and catalysis, while the other monomer binds to the replacement base PreQ1. Zn(2+) serves as cofactor.

It carries out the reaction 7-aminomethyl-7-carbaguanine + guanosine(34) in tRNA = 7-aminomethyl-7-carbaguanosine(34) in tRNA + guanine. It participates in tRNA modification; tRNA-queuosine biosynthesis. Catalyzes the base-exchange of a guanine (G) residue with the queuine precursor 7-aminomethyl-7-deazaguanine (PreQ1) at position 34 (anticodon wobble position) in tRNAs with GU(N) anticodons (tRNA-Asp, -Asn, -His and -Tyr). Catalysis occurs through a double-displacement mechanism. The nucleophile active site attacks the C1' of nucleotide 34 to detach the guanine base from the RNA, forming a covalent enzyme-RNA intermediate. The proton acceptor active site deprotonates the incoming PreQ1, allowing a nucleophilic attack on the C1' of the ribose to form the product. After dissociation, two additional enzymatic reactions on the tRNA convert PreQ1 to queuine (Q), resulting in the hypermodified nucleoside queuosine (7-(((4,5-cis-dihydroxy-2-cyclopenten-1-yl)amino)methyl)-7-deazaguanosine). In Acidithiobacillus ferrooxidans (strain ATCC 23270 / DSM 14882 / CIP 104768 / NCIMB 8455) (Ferrobacillus ferrooxidans (strain ATCC 23270)), this protein is Queuine tRNA-ribosyltransferase.